Reading from the N-terminus, the 503-residue chain is MVSIRPDEISSIIRQQIEQYEQSINVDNVGTVLQVGDGIARVYGLDKVMASELVEFEDGTVGIALNLEEDNVGVVLMGAGLGIEEGSTVRATGKIASVPVGEAVIGRVVDALMRPIDGKGEIHATATRLLESPAPGIVQRKSVCEPLQTGITAIDAMIPIGRGQRELIIGDRQTGKTAVAIDTILNQKGQDVICVYVAIGQKASSVAQVVNVLRERGALDYTIVVAANASDPAALQYLAPYTGASIAEYFMYQGKHTLVIYDDLSKQAQAYRQMSLLLRRPPGREAYPGDVFYLHSRLLERAAKLNDALGGGSMTALPIVETQAGDVSAYIPTNVISITDGQIFLSSDLFNAGLRPAINAGISVSRVGSAAQIKAMKQVAGKLKLELAQFDELQAFAQFASDLDKATQNQLARGQRLREILKQPQYSPIPVEYQVATIYAGTNGYLDDIPVEAVAKFVAGLRDYLATSKPQYGEAVRSSQKLDETAEALLKEAIAEYKAGFTA.

171–178 is a binding site for ATP; sequence DRQTGKTA.

The protein belongs to the ATPase alpha/beta chains family. F-type ATPases have 2 components, CF(1) - the catalytic core - and CF(0) - the membrane proton channel. CF(1) has five subunits: alpha(3), beta(3), gamma(1), delta(1), epsilon(1). CF(0) has four main subunits: a(1), b(1), b'(1) and c(9-12).

The protein resides in the cellular thylakoid membrane. It catalyses the reaction ATP + H2O + 4 H(+)(in) = ADP + phosphate + 5 H(+)(out). Produces ATP from ADP in the presence of a proton gradient across the membrane. The alpha chain is a regulatory subunit. The polypeptide is ATP synthase subunit alpha (Synechococcus sp. (strain PCC 6716)).